We begin with the raw amino-acid sequence, 488 residues long: NADH-quinone oxidoreductase subunit N (488 aa).

14 helical membrane-spanning segments follow: residues 15 to 35, 42 to 62, 79 to 99, 108 to 128, 133 to 153, 168 to 188, 209 to 229, 243 to 263, 277 to 297, 305 to 325, 333 to 353, 376 to 396, 409 to 429, and 456 to 476; these read LALPEIWMLVMACVVLVVDLY, GMTFMLTQFTLVVAGVLAIVA, NLAAVLKVAIAGLGFLSFAYC, LLKGEYFVLGLFSLLGMMIMA, LMTVYLGLELLALTLYAMVAF, FVLGAIASGILLYGMSLIYGA, WLLLLGMTLVVVGVAFKFGAV, PTTVALFASTAPKVAAVALFV, WQPMIILLAVASLVVGNLAAL, MLAYSTASHVGFILLGFIAGT, LFYAITYGIMSAGAFGLIILL, MALMMLLLMFSMTGIPGTVGF, VGLVWLAVFAVVFAVIGAFYY, and GLLVANGIAVLLLGIFPDSLI.

This sequence belongs to the complex I subunit 2 family. NDH-1 is composed of 14 different subunits. Subunits NuoA, H, J, K, L, M, N constitute the membrane sector of the complex.

It localises to the cell inner membrane. It carries out the reaction a quinone + NADH + 5 H(+)(in) = a quinol + NAD(+) + 4 H(+)(out). NDH-1 shuttles electrons from NADH, via FMN and iron-sulfur (Fe-S) centers, to quinones in the respiratory chain. The immediate electron acceptor for the enzyme in this species is believed to be ubiquinone. Couples the redox reaction to proton translocation (for every two electrons transferred, four hydrogen ions are translocated across the cytoplasmic membrane), and thus conserves the redox energy in a proton gradient. The polypeptide is NADH-quinone oxidoreductase subunit N (Alkalilimnicola ehrlichii (strain ATCC BAA-1101 / DSM 17681 / MLHE-1)).